A 207-amino-acid chain; its full sequence is Dephospho-CoA kinase (207 aa).

The region spanning 5–203 is the DPCK domain; it reads AVGLTGGVAC…ARYRALASVF (199 aa). 13-18 contacts ATP; sequence ACGKSL.

The protein belongs to the CoaE family.

It localises to the cytoplasm. The catalysed reaction is 3'-dephospho-CoA + ATP = ADP + CoA + H(+). The protein operates within cofactor biosynthesis; coenzyme A biosynthesis; CoA from (R)-pantothenate: step 5/5. Functionally, catalyzes the phosphorylation of the 3'-hydroxyl group of dephosphocoenzyme A to form coenzyme A. In Xylella fastidiosa (strain Temecula1 / ATCC 700964), this protein is Dephospho-CoA kinase.